Consider the following 378-residue polypeptide: uncharacterized protein (378 aa).

Zn(2+)-binding residues include Cys-38, His-60, Cys-90, Cys-93, Cys-96, and Cys-104.

It belongs to the zinc-containing alcohol dehydrogenase family. Class-III subfamily. It depends on Zn(2+) as a cofactor.

This is an uncharacterized protein from Bacillus subtilis (strain 168).